A 583-amino-acid chain; its full sequence is CTP synthase (583 aa).

The amidoligase domain stretch occupies residues 1–278 (MRKHPQTATK…DAYVVRRLNL (278 aa)). Ser20 is a CTP binding site. A UTP-binding site is contributed by Ser20. ATP contacts are provided by residues 21–26 (SLGKGL) and Asp78. Asp78 and Glu152 together coordinate Mg(2+). Residues 159–161 (DIE), 199–204 (KTKPTQ), and Lys235 contribute to the CTP site. UTP contacts are provided by residues 199 to 204 (KTKPTQ) and Lys235. The Glutamine amidotransferase type-1 domain maps to 303–551 (RIALVGKYVE…VGAAMDYKAG (249 aa)). Gly366 lines the L-glutamine pocket. The active-site Nucleophile; for glutamine hydrolysis is Cys393. Residues 394 to 397 (LGLQ), Glu416, and Arg477 contribute to the L-glutamine site. Catalysis depends on residues His524 and Glu526. The disordered stretch occupies residues 560 to 583 (EQSSNGIQHRDSAARPIPEPAARG).

It belongs to the CTP synthase family. As to quaternary structure, homotetramer.

It catalyses the reaction UTP + L-glutamine + ATP + H2O = CTP + L-glutamate + ADP + phosphate + 2 H(+). It carries out the reaction L-glutamine + H2O = L-glutamate + NH4(+). The enzyme catalyses UTP + NH4(+) + ATP = CTP + ADP + phosphate + 2 H(+). Its pathway is pyrimidine metabolism; CTP biosynthesis via de novo pathway; CTP from UDP: step 2/2. With respect to regulation, allosterically activated by GTP, when glutamine is the substrate; GTP has no effect on the reaction when ammonia is the substrate. The allosteric effector GTP functions by stabilizing the protein conformation that binds the tetrahedral intermediate(s) formed during glutamine hydrolysis. Inhibited by the product CTP, via allosteric rather than competitive inhibition. Catalyzes the ATP-dependent amination of UTP to CTP with either L-glutamine or ammonia as the source of nitrogen. Regulates intracellular CTP levels through interactions with the four ribonucleotide triphosphates. This is CTP synthase from Mycolicibacterium paratuberculosis (strain ATCC BAA-968 / K-10) (Mycobacterium paratuberculosis).